The sequence spans 83 residues: Small ribosomal subunit protein eS21 (83 aa).

The protein belongs to the eukaryotic ribosomal protein eS21 family. Component of the 40S small ribosomal subunit.

The protein resides in the cytoplasm. The protein localises to the cytosol. Its subcellular location is the rough endoplasmic reticulum. The protein is Small ribosomal subunit protein eS21 (RpS21) of Biphyllus lunatus (Beetle).